The following is a 335-amino-acid chain: Phosphate acyltransferase (335 aa).

Belongs to the PlsX family. Homodimer. Probably interacts with PlsY.

Its subcellular location is the cytoplasm. It catalyses the reaction a fatty acyl-[ACP] + phosphate = an acyl phosphate + holo-[ACP]. The protein operates within lipid metabolism; phospholipid metabolism. Functionally, catalyzes the reversible formation of acyl-phosphate (acyl-PO(4)) from acyl-[acyl-carrier-protein] (acyl-ACP). This enzyme utilizes acyl-ACP as fatty acyl donor, but not acyl-CoA. The polypeptide is Phosphate acyltransferase (Streptococcus equi subsp. zooepidemicus (strain MGCS10565)).